The sequence spans 487 residues: GTPase Der (487 aa).

EngA-type G domains follow at residues 3–166 and 201–374; these read PVIA…IAEL and VKLA…ESAT. GTP is bound by residues 9 to 16, 56 to 60, 118 to 121, 207 to 214, 254 to 258, and 319 to 322; these read GRPNVGKS, DTGGI, NKTD, DTAGV, and NKWD. The 85-residue stretch at 375–459 folds into the KH-like domain; the sequence is KRISTAMLRR…PIKIEFREGD (85 aa).

Belongs to the TRAFAC class TrmE-Era-EngA-EngB-Septin-like GTPase superfamily. EngA (Der) GTPase family. Associates with the 50S ribosomal subunit.

In terms of biological role, GTPase that plays an essential role in the late steps of ribosome biogenesis. The protein is GTPase Der of Pseudoalteromonas translucida (strain TAC 125).